Consider the following 115-residue polypeptide: Cysteine-rich venom protein 5 (115 aa).

Residues 1–22 (MSKVMIIMLVGMIFAIISTVSG) form the signal peptide. Disulfide bonds link Cys26–Cys41, Cys33–Cys44, and Cys40–Cys51. Positions 54–115 (RIGPPINTQP…RKPTNRPRSH (62 aa)) are disordered. Composition is skewed to basic residues over residues 68–77 (QPTRRTRGPK) and 86–115 (NRTR…PRSH).

Expressed by the venom gland.

It localises to the secreted. The polypeptide is Cysteine-rich venom protein 5 (Pimpla hypochondriaca (Parasitoid wasp)).